We begin with the raw amino-acid sequence, 276 residues long: Pantothenate synthetase (276 aa).

26–33 (MGFLHEGH) serves as a coordination point for ATP. Catalysis depends on His-33, which acts as the Proton donor. Gln-57 contacts (R)-pantoate. Gln-57 lines the beta-alanine pocket. 142-145 (GLKD) contributes to the ATP binding site. (R)-pantoate is bound at residue Gln-148. ATP-binding positions include Ile-171 and 179-182 (KSSR).

This sequence belongs to the pantothenate synthetase family. Homodimer.

The protein resides in the cytoplasm. The enzyme catalyses (R)-pantoate + beta-alanine + ATP = (R)-pantothenate + AMP + diphosphate + H(+). It functions in the pathway cofactor biosynthesis; (R)-pantothenate biosynthesis; (R)-pantothenate from (R)-pantoate and beta-alanine: step 1/1. Catalyzes the condensation of pantoate with beta-alanine in an ATP-dependent reaction via a pantoyl-adenylate intermediate. This Exiguobacterium sibiricum (strain DSM 17290 / CCUG 55495 / CIP 109462 / JCM 13490 / 255-15) protein is Pantothenate synthetase.